The primary structure comprises 539 residues: Phosphoenolpyruvate carboxykinase (ATP) (539 aa).

Positions 64, 206, and 212 each coordinate substrate. Residues Lys-212, His-231, and 247 to 255 (GLSGTGKTT) contribute to the ATP site. 2 residues coordinate Mn(2+): Lys-212 and His-231. Asp-268 is a Mn(2+) binding site. Residues Glu-296, Arg-332, 448–449 (RI), and Thr-454 contribute to the ATP site. Arg-332 is a substrate binding site.

The protein belongs to the phosphoenolpyruvate carboxykinase (ATP) family. Monomer. Mn(2+) serves as cofactor.

The protein localises to the cytoplasm. The enzyme catalyses oxaloacetate + ATP = phosphoenolpyruvate + ADP + CO2. The protein operates within carbohydrate biosynthesis; gluconeogenesis. Its function is as follows. Involved in the gluconeogenesis. Catalyzes the conversion of oxaloacetate (OAA) to phosphoenolpyruvate (PEP) through direct phosphoryl transfer between the nucleoside triphosphate and OAA. This chain is Phosphoenolpyruvate carboxykinase (ATP), found in Yersinia pseudotuberculosis serotype IB (strain PB1/+).